The following is a 559-amino-acid chain: Germacrene A synthase 1 (559 aa).

Positions 312, 316, 456, 460, and 464 each coordinate Mg(2+). The short motif at 312 to 316 (DDTYD) is the DDXXD motif element.

Belongs to the terpene synthase family. Monomer. Mg(2+) is required as a cofactor. In terms of tissue distribution, mainly expressed in sunflower trichomes.

It catalyses the reaction (2E,6E)-farnesyl diphosphate = (+)-(R)-germacrene A + diphosphate. The protein operates within secondary metabolite biosynthesis; terpenoid biosynthesis. In terms of biological role, sesquiterpene synthase involved in germacrene A biosynthesis. Germacrene A is a precursor of several sesquiterpene lactones. In Helianthus annuus (Common sunflower), this protein is Germacrene A synthase 1.